We begin with the raw amino-acid sequence, 1003 residues long: PHD finger protein 12 (1003 aa).

Positions 29–59 are disordered; the sequence is APPKTDEAEKRSRKPEKESRRSGRATNHDSC. The segment covering 32 to 59 has biased composition (basic and acidic residues); it reads KTDEAEKRSRKPEKESRRSGRATNHDSC. The segment at 56–105 adopts a PHD-type 1 zinc-finger fold; that stretch reads HDSCDSCKEGGDLLCCDHCPAAFHLQCCNPPLSEEMLPPGEWMCHRCTVR. 5 residues coordinate Zn(2+): Cys-59, Ser-61, Cys-62, His-79, and Cys-82. Disordered stretches follow at residues 110 to 183 and 234 to 255; these read EQKK…HNDV and TTAL…KNVK. Phosphoserine is present on residues Ser-131 and Ser-134. The span at 138-161 shows a compositional bias: basic and acidic residues; sequence LLDRPASKTELKAIAHARILERRA. The span at 165–178 shows a compositional bias: polar residues; it reads GTPTSNASTETPTS. The SIN3 interacting domain 1 stretch occupies residues 202–241; it reads VQPQLRRPFELLIAAAMERNPTQFQLPNELTCTTALPGSS. Residues 271 to 321 form a PHD-type 2; atypical zinc finger; sequence VKVCFTCNRSCRVAPLIQCDYCPLLFHMDCLEPPLTAMPLGRWMCPNHIEH. Residues Cys-274, Cys-277, Cys-289, Cys-292, His-297, Cys-300, Cys-315, and His-318 each coordinate Zn(2+). Residues 328 to 364 form an SIN3 interacting domain 2 region; sequence NLTLSNRCQVFDRFQDTISQHVVKVDFLNRIHKKHPP. Lys-467 is covalently cross-linked (Glycyl lysine isopeptide (Lys-Gly) (interchain with G-Cter in SUMO2)). Disordered stretches follow at residues 531-583 and 641-671; these read KAPC…GWPR and HRKT…VLTP. Residue Ser-555 is modified to Phosphoserine. Phosphothreonine occurs at positions 557 and 570. Positions 641–656 are enriched in polar residues; the sequence is HRKTVQSQIGPSSTES. Residue Thr-670 is modified to Phosphothreonine. Residues 814-868 form the FHA domain; sequence LYIGTGADMDVCLTNYGHCNYVSGKHACIFYDENTKHYELLNYSEHGTTVDNVLY. The segment at 894–922 is disordered; that stretch reads RRRHQKQDEEPSEEAAMMSSQAQGPQRRP. Lys-899 is covalently cross-linked (Glycyl lysine isopeptide (Lys-Gly) (interchain with G-Cter in SUMO2)). A compositionally biased stretch (low complexity) spans 907–916; it reads EAAMMSSQAQ. Glycyl lysine isopeptide (Lys-Gly) (interchain with G-Cter in SUMO2) cross-links involve residues Lys-972, Lys-986, and Lys-990.

Component of SIN3 complexes. Interacts with SIN3A in a complex composed of HDAC1, SAP30 and SIN3A. Component of the SIN3B complex, which includes SIN3B, HDAC2 or HDAC1, PHF12 and MORF4L1; interacts directly with all subunits. Interacts with TLE5. As to expression, expressed mainly in heart, brain, lung, liver and testis.

It is found in the nucleus. Its function is as follows. Transcriptional repressor acting as key scaffolding subunit of SIN3 complexes which contributes to complex assembly by contacting each core subunit domain, stabilizes the complex and constitutes the substrate receptor by recruiting the H3 histone tail. SIN3 complexes are composed of a SIN3 scaffold subunit, one catalytic core (HDAC1 or HDAC2) and 2 chromatin targeting modules. SIN3B complex represses transcription and counteracts the histone acetyltransferase activity of EP300 through the recognition H3K27ac marks by PHF12 and the activity of the histone deacetylase HDAC2. SIN3B complex is recruited downstream of the constitutively active genes transcriptional start sites through interaction with histones and mitigates histone acetylation and RNA polymerase II progression within transcribed regions contributing to the regulation of transcription. May also repress transcription in a SIN3A-independent manner through recruitment of functional TLE5 complexes to DNA. May also play a role in ribosomal biogenesis. In Mus musculus (Mouse), this protein is PHD finger protein 12.